A 370-amino-acid chain; its full sequence is Probable endopolygalacturonase A (370 aa).

A signal peptide spans Met-1–Ala-19. A propeptide spanning residues Ala-20–Arg-32 is cleaved from the precursor. A disulfide bond links Cys-35 and Cys-50. PbH1 repeat units follow at residues Ser-162 to Glu-192, Ser-193 to Ser-214, Gly-215 to Ser-235, Val-244 to Thr-265, Val-273 to Gln-295, and Ser-307 to Gly-352. Residue Asp-207 is the Proton donor of the active site. Cysteines 209 and 225 form a disulfide. Residue His-229 is part of the active site. N-linked (GlcNAc...) asparagine glycosylation occurs at Asn-246. 2 cysteine pairs are disulfide-bonded: Cys-335-Cys-340 and Cys-359-Cys-368.

Belongs to the glycosyl hydrolase 28 family.

The protein resides in the secreted. The catalysed reaction is (1,4-alpha-D-galacturonosyl)n+m + H2O = (1,4-alpha-D-galacturonosyl)n + (1,4-alpha-D-galacturonosyl)m.. Involved in maceration and soft-rotting of plant tissue. Hydrolyzes the 1,4-alpha glycosidic bonds of de-esterified pectate in the smooth region of the plant cell wall. The chain is Probable endopolygalacturonase A (pgaA) from Aspergillus niger (strain ATCC MYA-4892 / CBS 513.88 / FGSC A1513).